A 293-amino-acid chain; its full sequence is Acetyl-coenzyme A carboxylase carboxyl transferase subunit beta (293 aa).

One can recognise a CoA carboxyltransferase N-terminal domain in the interval Leu29–Thr293. Residues Cys33, Cys36, Cys52, and Cys55 each contribute to the Zn(2+) site. The segment at Cys33–Cys55 adopts a C4-type zinc-finger fold.

The protein belongs to the AccD/PCCB family. In terms of assembly, acetyl-CoA carboxylase is a heterohexamer composed of biotin carboxyl carrier protein (AccB), biotin carboxylase (AccC) and two subunits each of ACCase subunit alpha (AccA) and ACCase subunit beta (AccD). Zn(2+) serves as cofactor.

It is found in the cytoplasm. It carries out the reaction N(6)-carboxybiotinyl-L-lysyl-[protein] + acetyl-CoA = N(6)-biotinyl-L-lysyl-[protein] + malonyl-CoA. It functions in the pathway lipid metabolism; malonyl-CoA biosynthesis; malonyl-CoA from acetyl-CoA: step 1/1. In terms of biological role, component of the acetyl coenzyme A carboxylase (ACC) complex. Biotin carboxylase (BC) catalyzes the carboxylation of biotin on its carrier protein (BCCP) and then the CO(2) group is transferred by the transcarboxylase to acetyl-CoA to form malonyl-CoA. This is Acetyl-coenzyme A carboxylase carboxyl transferase subunit beta from Prochlorococcus marinus (strain MIT 9301).